The primary structure comprises 218 residues: Sec-independent protein translocase protein TatB (218 aa).

Residues 1–21 (MFDIGFSELLLVLVIGLVVLG) form a helical membrane-spanning segment. Disordered regions lie at residues 126–145 (AESA…DVDK) and 174–218 (SSVD…GGDR). Residues 199-218 (HSTDSHGADQPRTHQPGGDR) show a composition bias toward basic and acidic residues.

It belongs to the TatB family. In terms of assembly, the Tat system comprises two distinct complexes: a TatABC complex, containing multiple copies of TatA, TatB and TatC subunits, and a separate TatA complex, containing only TatA subunits. Substrates initially bind to the TatABC complex, which probably triggers association of the separate TatA complex to form the active translocon.

The protein resides in the cell inner membrane. Its function is as follows. Part of the twin-arginine translocation (Tat) system that transports large folded proteins containing a characteristic twin-arginine motif in their signal peptide across membranes. Together with TatC, TatB is part of a receptor directly interacting with Tat signal peptides. TatB may form an oligomeric binding site that transiently accommodates folded Tat precursor proteins before their translocation. The polypeptide is Sec-independent protein translocase protein TatB (Yersinia enterocolitica serotype O:8 / biotype 1B (strain NCTC 13174 / 8081)).